The primary structure comprises 91 residues: Probable Fe(2+)-trafficking protein (91 aa).

This sequence belongs to the Fe(2+)-trafficking protein family. Monomer.

In terms of biological role, could be a mediator in iron transactions between iron acquisition and iron-requiring processes, such as synthesis and/or repair of Fe-S clusters in biosynthetic enzymes. The protein is Probable Fe(2+)-trafficking protein of Escherichia coli O6:H1 (strain CFT073 / ATCC 700928 / UPEC).